The sequence spans 282 residues: Inositol oxygenase (282 aa).

Residues 1–25 (MKDPDPSQVYRPDMDPEAAKDKGSF) form a disordered region. Over residues 12-24 (PDMDPEAAKDKGS) the composition is skewed to basic and acidic residues. Position 26 (arginine 26) interacts with substrate. Serine 30 is modified (phosphoserine). 82–84 (DES) is a binding site for substrate. Fe cation-binding residues include histidine 95, histidine 120, and aspartate 121. Residues lysine 124 and 138–139 (GD) each bind substrate. Residues histidine 191, histidine 217, and aspartate 250 each contribute to the Fe cation site. 217-218 (HS) lines the substrate pocket.

This sequence belongs to the myo-inositol oxygenase family. The cofactor is Fe cation. In terms of processing, the N-terminus is blocked. In terms of tissue distribution, kidney specific.

It localises to the cytoplasm. It carries out the reaction myo-inositol + O2 = D-glucuronate + H2O + H(+). The protein operates within polyol metabolism; myo-inositol degradation into D-glucuronate; D-glucuronate from myo-inositol: step 1/1. The chain is Inositol oxygenase (MIOX) from Sus scrofa (Pig).